The chain runs to 363 residues: tRNA/tmRNA (uracil-C(5))-methyltransferase (363 aa).

S-adenosyl-L-methionine is bound by residues glutamine 187, tyrosine 215, asparagine 220, glutamate 236, and aspartate 296. Residue cysteine 321 is the Nucleophile of the active site. Glutamate 355 (proton acceptor) is an active-site residue.

Belongs to the class I-like SAM-binding methyltransferase superfamily. RNA M5U methyltransferase family. TrmA subfamily.

The catalysed reaction is uridine(54) in tRNA + S-adenosyl-L-methionine = 5-methyluridine(54) in tRNA + S-adenosyl-L-homocysteine + H(+). The enzyme catalyses uridine(341) in tmRNA + S-adenosyl-L-methionine = 5-methyluridine(341) in tmRNA + S-adenosyl-L-homocysteine + H(+). Functionally, dual-specificity methyltransferase that catalyzes the formation of 5-methyluridine at position 54 (m5U54) in all tRNAs, and that of position 341 (m5U341) in tmRNA (transfer-mRNA). This Pseudomonas aeruginosa (strain LESB58) protein is tRNA/tmRNA (uracil-C(5))-methyltransferase.